Consider the following 134-residue polypeptide: Small ribosomal subunit protein uS9 (134 aa).

This sequence belongs to the universal ribosomal protein uS9 family.

The protein is Small ribosomal subunit protein uS9 of Pseudothermotoga lettingae (strain ATCC BAA-301 / DSM 14385 / NBRC 107922 / TMO) (Thermotoga lettingae).